Consider the following 201-residue polypeptide: Small ribosomal subunit protein uS4c (201 aa).

Positions 89–149 constitute an S4 RNA-binding domain; sequence MRLDNILFRL…DEQKSRALIQ (61 aa).

It belongs to the universal ribosomal protein uS4 family. Part of the 30S ribosomal subunit. Contacts protein S5. The interaction surface between S4 and S5 is involved in control of translational fidelity.

It localises to the plastid. It is found in the chloroplast. Its function is as follows. One of the primary rRNA binding proteins, it binds directly to 16S rRNA where it nucleates assembly of the body of the 30S subunit. With S5 and S12 plays an important role in translational accuracy. The chain is Small ribosomal subunit protein uS4c (rps4) from Coffea arabica (Arabian coffee).